We begin with the raw amino-acid sequence, 332 residues long: 2-oxoglutarate-dependent dioxygenase ecdK (332 aa).

In terms of domain architecture, Fe2OG dioxygenase spans 178–294 (HASELRLNHY…RRSVAFFLKP (117 aa)). Residues His-206, Asp-208, and His-266 each contribute to the Fe cation site. Position 285 (Arg-285) interacts with 2-oxoglutarate.

Belongs to the iron/ascorbate-dependent oxidoreductase family. Requires Fe(2+) as cofactor.

The protein operates within antifungal biosynthesis. In terms of biological role, 2-oxoglutarate-dependent dioxygenase; part of the gene cluster that mediates the biosynthesis of echinocandin B, a fungal lipidated cyclic hexapeptide that acts as an antifungal agent. Linoleoyl-AMP, produced by the fatty-acyl-AMP ligase ecdI, is transferred to the initiation carrier domain (T0) of ecdA. The linoleoyl-S-phosphopantetheinyl-T0 is sequentially extended with L-ornithine, L-threonine, L-proline, L-homotyrosine, L-threonine, and 4R-methyl-L-proline to form the linear hexapeptide. Thereafter, the terminal condensation (C7) performs macrocyclization of the NRPS product and the cyclic scaffold is released from ecdA. All six of the amino acid residues are hydroxylated, including 4R,5R-dihydroxy-L-ornithine, 4R-hydroxyl-L-proline, 3S,4S-dihydroxy-L-homotyrosine, and 3S-hydroxyl-4S-methyl-L-prolin. In the pathway, all the hydroxylation reactions are proposed to occur following completion of the cyclic peptide, so the unhydroxylated precursor produced by ecdA will undergo six rounds of hydroxylation. Five hydroxylase genes (ecdG, ecdH, ecdK, htyE and htyF) are embedded within the echinocandin B (ecd) and L-homotyrosine (hty) clusters. The chain is 2-oxoglutarate-dependent dioxygenase ecdK from Aspergillus rugulosus (Emericella rugulosa).